The chain runs to 336 residues: Dihydroorotate dehydrogenase (quinone) (336 aa).

FMN contacts are provided by residues 62 to 66 (AGLDK) and T86. Residue K66 participates in substrate binding. Residue 111–115 (NRMGF) coordinates substrate. Residues N139 and N172 each coordinate FMN. Substrate is bound at residue N172. S175 acts as the Nucleophile in catalysis. Residue N177 coordinates substrate. Residues K217 and T245 each coordinate FMN. 246 to 247 (NT) lines the substrate pocket. FMN is bound by residues G268, G297, and 318-319 (YS).

It belongs to the dihydroorotate dehydrogenase family. Type 2 subfamily. In terms of assembly, monomer. The cofactor is FMN.

It is found in the cell membrane. It carries out the reaction (S)-dihydroorotate + a quinone = orotate + a quinol. The protein operates within pyrimidine metabolism; UMP biosynthesis via de novo pathway; orotate from (S)-dihydroorotate (quinone route): step 1/1. In terms of biological role, catalyzes the conversion of dihydroorotate to orotate with quinone as electron acceptor. This Edwardsiella ictaluri (strain 93-146) protein is Dihydroorotate dehydrogenase (quinone).